The primary structure comprises 260 residues: uncharacterized protein (260 aa).

An N-terminal signal peptide occupies residues 1 to 22; the sequence is MGYSKRFALYISILILIVMVAG. A lipid anchor (N-palmitoyl cysteine) is attached at cysteine 23. Cysteine 23 carries S-diacylglycerol cysteine lipidation.

It belongs to the staphylococcal tandem lipoprotein family.

The protein localises to the cell membrane. This is an uncharacterized protein from Staphylococcus aureus (strain N315).